Here is a 143-residue protein sequence, read N- to C-terminus: Nucleoside diphosphate kinase (143 aa).

Residues Lys11, Phe59, Arg87, Thr93, Arg104, and Asn114 each coordinate ATP. Catalysis depends on His117, which acts as the Pros-phosphohistidine intermediate.

Belongs to the NDK family. Homotetramer. It depends on Mg(2+) as a cofactor.

Its subcellular location is the cytoplasm. The catalysed reaction is a 2'-deoxyribonucleoside 5'-diphosphate + ATP = a 2'-deoxyribonucleoside 5'-triphosphate + ADP. It catalyses the reaction a ribonucleoside 5'-diphosphate + ATP = a ribonucleoside 5'-triphosphate + ADP. Functionally, major role in the synthesis of nucleoside triphosphates other than ATP. The ATP gamma phosphate is transferred to the NDP beta phosphate via a ping-pong mechanism, using a phosphorylated active-site intermediate. The polypeptide is Nucleoside diphosphate kinase (Salmonella arizonae (strain ATCC BAA-731 / CDC346-86 / RSK2980)).